Consider the following 397-residue polypeptide: Tryptophan synthase beta chain (397 aa).

N6-(pyridoxal phosphate)lysine is present on lysine 87.

This sequence belongs to the TrpB family. In terms of assembly, tetramer of two alpha and two beta chains. The cofactor is pyridoxal 5'-phosphate.

It catalyses the reaction (1S,2R)-1-C-(indol-3-yl)glycerol 3-phosphate + L-serine = D-glyceraldehyde 3-phosphate + L-tryptophan + H2O. It functions in the pathway amino-acid biosynthesis; L-tryptophan biosynthesis; L-tryptophan from chorismate: step 5/5. The beta subunit is responsible for the synthesis of L-tryptophan from indole and L-serine. The protein is Tryptophan synthase beta chain of Escherichia coli O157:H7.